A 103-amino-acid chain; its full sequence is Large ribosomal subunit protein bL21 (103 aa).

It belongs to the bacterial ribosomal protein bL21 family. As to quaternary structure, part of the 50S ribosomal subunit. Contacts protein L20.

Functionally, this protein binds to 23S rRNA in the presence of protein L20. The polypeptide is Large ribosomal subunit protein bL21 (Aliivibrio salmonicida (strain LFI1238) (Vibrio salmonicida (strain LFI1238))).